A 337-amino-acid chain; its full sequence is UDP-3-O-acylglucosamine N-acyltransferase (337 aa).

Histidine 238 functions as the Proton acceptor in the catalytic mechanism.

It belongs to the transferase hexapeptide repeat family. LpxD subfamily. As to quaternary structure, homotrimer.

The catalysed reaction is a UDP-3-O-[(3R)-3-hydroxyacyl]-alpha-D-glucosamine + a (3R)-hydroxyacyl-[ACP] = a UDP-2-N,3-O-bis[(3R)-3-hydroxyacyl]-alpha-D-glucosamine + holo-[ACP] + H(+). Its pathway is bacterial outer membrane biogenesis; LPS lipid A biosynthesis. Its function is as follows. Catalyzes the N-acylation of UDP-3-O-acylglucosamine using 3-hydroxyacyl-ACP as the acyl donor. Is involved in the biosynthesis of lipid A, a phosphorylated glycolipid that anchors the lipopolysaccharide to the outer membrane of the cell. This is UDP-3-O-acylglucosamine N-acyltransferase from Xanthomonas euvesicatoria pv. vesicatoria (strain 85-10) (Xanthomonas campestris pv. vesicatoria).